The primary structure comprises 260 residues: Na(+)-translocating NADH-quinone reductase subunit C (260 aa).

Residues 12 to 32 (LLVIILLSLACSIIVAGSAVL) traverse the membrane as a helical segment. Thr-226 carries the post-translational modification FMN phosphoryl threonine.

This sequence belongs to the NqrC family. As to quaternary structure, composed of six subunits; NqrA, NqrB, NqrC, NqrD, NqrE and NqrF. FMN serves as cofactor.

It is found in the cell inner membrane. It catalyses the reaction a ubiquinone + n Na(+)(in) + NADH + H(+) = a ubiquinol + n Na(+)(out) + NAD(+). Its function is as follows. NQR complex catalyzes the reduction of ubiquinone-1 to ubiquinol by two successive reactions, coupled with the transport of Na(+) ions from the cytoplasm to the periplasm. NqrA to NqrE are probably involved in the second step, the conversion of ubisemiquinone to ubiquinol. In Pasteurella multocida (strain Pm70), this protein is Na(+)-translocating NADH-quinone reductase subunit C.